A 526-amino-acid polypeptide reads, in one-letter code: Cholesterol side-chain cleavage enzyme, mitochondrial (526 aa).

Residues 1-36 constitute a mitochondrion transit peptide; it reads MLAKGLCLRSVLVKSCQPFLSPVWQGPGLATGNGAG. Cys-459 is a binding site for heme.

The protein belongs to the cytochrome P450 family. As to quaternary structure, interacts with FDX1/adrenodoxin. The cofactor is heme. As to expression, expressed in the kidney where it localizes to the distal convoluted tubule and the thick ascending limb of the loop of Henle (at protein level). In the ovary, highly expressed in interstitial cells (at protein level). Also expressed in adrenal gland and testis.

It is found in the mitochondrion inner membrane. It catalyses the reaction 6 reduced [adrenodoxin] + cholesterol + 3 O2 + 6 H(+) = 4-methylpentanal + pregnenolone + 6 oxidized [adrenodoxin] + 4 H2O. The enzyme catalyses 2 reduced [adrenodoxin] + cholesterol + O2 + 2 H(+) = (22R)-hydroxycholesterol + 2 oxidized [adrenodoxin] + H2O. The catalysed reaction is (22R)-hydroxycholesterol + 2 reduced [adrenodoxin] + O2 + 2 H(+) = (20R,22R)-20,22-dihydroxycholesterol + 2 oxidized [adrenodoxin] + H2O. It carries out the reaction (20R,22R)-20,22-dihydroxycholesterol + 2 reduced [adrenodoxin] + O2 + 2 H(+) = 4-methylpentanal + pregnenolone + 2 oxidized [adrenodoxin] + 2 H2O. The protein operates within lipid metabolism; C21-steroid hormone metabolism. Its pathway is steroid metabolism; cholesterol metabolism. A cytochrome P450 monooxygenase that catalyzes the side-chain hydroxylation and cleavage of cholesterol to pregnenolone, the precursor of most steroid hormones. Catalyzes three sequential oxidation reactions of cholesterol, namely the hydroxylation at C22 followed with the hydroxylation at C20 to yield 20R,22R-hydroxycholesterol that is further cleaved between C20 and C22 to yield the C21-steroid pregnenolone and 4-methylpentanal. Mechanistically, uses molecular oxygen inserting one oxygen atom into a substrate and reducing the second into a water molecule. Two electrons are provided by NADPH via a two-protein mitochondrial transfer system comprising flavoprotein FDXR (adrenodoxin/ferredoxin reductase) and nonheme iron-sulfur protein FDX1 or FDX2 (adrenodoxin/ferredoxin). This is Cholesterol side-chain cleavage enzyme, mitochondrial from Rattus norvegicus (Rat).